The sequence spans 82 residues: uncharacterized protein (82 aa).

The interval 22-82 is disordered; the sequence is LRRSRSSRNG…WPPPCAFTPG (61 aa). The segment covering 47-58 has biased composition (basic and acidic residues); sequence HRGEPGHPRMEE. Over residues 73–82 the composition is skewed to pro residues; sequence WPPPCAFTPG.

This is an uncharacterized protein from Homo sapiens (Human).